The chain runs to 294 residues: Acetyl-coenzyme A carboxylase carboxyl transferase subunit beta (294 aa).

The 270-residue stretch at 25–294 (VWTKCTACEQ…PFLEPEIIAD (270 aa)) folds into the CoA carboxyltransferase N-terminal domain. C29, C32, C48, and C51 together coordinate Zn(2+). Residues 29-51 (CTACEQVLYRDELKRHLEVCPKC) form a C4-type zinc finger.

This sequence belongs to the AccD/PCCB family. Acetyl-CoA carboxylase is a heterohexamer composed of biotin carboxyl carrier protein (AccB), biotin carboxylase (AccC) and two subunits each of ACCase subunit alpha (AccA) and ACCase subunit beta (AccD). Requires Zn(2+) as cofactor.

The protein localises to the cytoplasm. The enzyme catalyses N(6)-carboxybiotinyl-L-lysyl-[protein] + acetyl-CoA = N(6)-biotinyl-L-lysyl-[protein] + malonyl-CoA. The protein operates within lipid metabolism; malonyl-CoA biosynthesis; malonyl-CoA from acetyl-CoA: step 1/1. In terms of biological role, component of the acetyl coenzyme A carboxylase (ACC) complex. Biotin carboxylase (BC) catalyzes the carboxylation of biotin on its carrier protein (BCCP) and then the CO(2) group is transferred by the transcarboxylase to acetyl-CoA to form malonyl-CoA. The protein is Acetyl-coenzyme A carboxylase carboxyl transferase subunit beta of Actinobacillus succinogenes (strain ATCC 55618 / DSM 22257 / CCUG 43843 / 130Z).